The primary structure comprises 231 residues: Large ribosomal subunit protein uL1 (231 aa).

It belongs to the universal ribosomal protein uL1 family. As to quaternary structure, part of the 50S ribosomal subunit.

Binds directly to 23S rRNA. The L1 stalk is quite mobile in the ribosome, and is involved in E site tRNA release. Its function is as follows. Protein L1 is also a translational repressor protein, it controls the translation of the L11 operon by binding to its mRNA. The protein is Large ribosomal subunit protein uL1 of Alcanivorax borkumensis (strain ATCC 700651 / DSM 11573 / NCIMB 13689 / SK2).